The sequence spans 473 residues: Photosystem II CP43 reaction center protein (473 aa).

A propeptide spanning residues 1–14 (MKTLYSPRRYYPVE) is cleaved from the precursor. Position 15 is an N-acetylthreonine (Thr-15). Residue Thr-15 is modified to Phosphothreonine. Transmembrane regions (helical) follow at residues 69 to 93 (LFEV…PHLA), 134 to 155 (IIGP…KDKN), 178 to 200 (KAVW…RVIT), 255 to 275 (KPFA…LSYS), and 291 to 312 (WFNN…ASQA). Glu-367 provides a ligand contact to [CaMn4O5] cluster. The helical transmembrane segment at 447–471 (RARAAAAGFEKGIERETEPVLFMSP) threads the bilayer.

The protein belongs to the PsbB/PsbC family. PsbC subfamily. PSII is composed of 1 copy each of membrane proteins PsbA, PsbB, PsbC, PsbD, PsbE, PsbF, PsbH, PsbI, PsbJ, PsbK, PsbL, PsbM, PsbT, PsbX, PsbY, PsbZ, Psb30/Ycf12, at least 3 peripheral proteins of the oxygen-evolving complex and a large number of cofactors. It forms dimeric complexes. Binds multiple chlorophylls and provides some of the ligands for the Ca-4Mn-5O cluster of the oxygen-evolving complex. It may also provide a ligand for a Cl- that is required for oxygen evolution. PSII binds additional chlorophylls, carotenoids and specific lipids. is required as a cofactor.

The protein localises to the plastid. It localises to the chloroplast thylakoid membrane. In terms of biological role, one of the components of the core complex of photosystem II (PSII). It binds chlorophyll and helps catalyze the primary light-induced photochemical processes of PSII. PSII is a light-driven water:plastoquinone oxidoreductase, using light energy to abstract electrons from H(2)O, generating O(2) and a proton gradient subsequently used for ATP formation. In Chaetosphaeridium globosum (Charophycean green alga), this protein is Photosystem II CP43 reaction center protein.